The chain runs to 174 residues: Rubredoxin-2 (174 aa).

A Rubredoxin-like 1 domain is found at 1-53 (MAKYQCPDCEYIYDEVAGHPHEGFPPGTSWETIPEEWACPDCAVRDKADFVVI). Residues cysteine 6, cysteine 9, cysteine 39, and cysteine 42 each coordinate Fe cation. A compositionally biased stretch (low complexity) spans 56-65 (GSASPASGAA). Positions 56-115 (GSASPASGAATPEVRTATTPPKAEASPQKSTGASTPSANNKAKAKAKAKPARAKSSKDST) are disordered. Positions 97–109 (AKAKAKAKPARAK) are enriched in basic residues. Residues 121–172 (FRKWICITCGHIYDEALGDETEGFAPGTLFEDIPDDWCCPDCGATKEDYVLH) enclose the Rubredoxin-like 2 domain. Positions 126, 129, 159, and 162 each coordinate Fe cation.

It belongs to the rubredoxin family. Fe(3+) is required as a cofactor.

It localises to the cytoplasm. It participates in hydrocarbon metabolism; alkane degradation. In terms of biological role, involved in the hydrocarbon hydroxylating system, which transfers electrons from NADH to rubredoxin reductase and then through rubredoxin to alkane 1 monooxygenase. This Alcanivorax borkumensis (strain ATCC 700651 / DSM 11573 / NCIMB 13689 / SK2) protein is Rubredoxin-2 (alkG).